Here is a 162-residue protein sequence, read N- to C-terminus: Cyanate hydratase (162 aa).

Catalysis depends on residues Arg-102, Glu-105, and Ser-128.

This sequence belongs to the cyanase family.

The catalysed reaction is cyanate + hydrogencarbonate + 3 H(+) = NH4(+) + 2 CO2. In terms of biological role, catalyzes the reaction of cyanate with bicarbonate to produce ammonia and carbon dioxide. The polypeptide is Cyanate hydratase (Mycosarcoma maydis (Corn smut fungus)).